The primary structure comprises 479 residues: Bifunctional protein HldE (479 aa).

Positions 1–322 (MLAETQLAPI…AALERTAAQI (322 aa)) are ribokinase. 198 to 201 (NRRE) contributes to the ATP binding site. The active site involves Asp267. The cytidylyltransferase stretch occupies residues 350 to 479 (FTNGCFDLVH…TSSLVAKART (130 aa)).

It in the N-terminal section; belongs to the carbohydrate kinase PfkB family. In the C-terminal section; belongs to the cytidylyltransferase family. In terms of assembly, homodimer.

It carries out the reaction D-glycero-beta-D-manno-heptose 7-phosphate + ATP = D-glycero-beta-D-manno-heptose 1,7-bisphosphate + ADP + H(+). The enzyme catalyses D-glycero-beta-D-manno-heptose 1-phosphate + ATP + H(+) = ADP-D-glycero-beta-D-manno-heptose + diphosphate. It functions in the pathway nucleotide-sugar biosynthesis; ADP-L-glycero-beta-D-manno-heptose biosynthesis; ADP-L-glycero-beta-D-manno-heptose from D-glycero-beta-D-manno-heptose 7-phosphate: step 1/4. The protein operates within nucleotide-sugar biosynthesis; ADP-L-glycero-beta-D-manno-heptose biosynthesis; ADP-L-glycero-beta-D-manno-heptose from D-glycero-beta-D-manno-heptose 7-phosphate: step 3/4. Its function is as follows. Catalyzes the phosphorylation of D-glycero-D-manno-heptose 7-phosphate at the C-1 position to selectively form D-glycero-beta-D-manno-heptose-1,7-bisphosphate. In terms of biological role, catalyzes the ADP transfer from ATP to D-glycero-beta-D-manno-heptose 1-phosphate, yielding ADP-D-glycero-beta-D-manno-heptose. The polypeptide is Bifunctional protein HldE (Azorhizobium caulinodans (strain ATCC 43989 / DSM 5975 / JCM 20966 / LMG 6465 / NBRC 14845 / NCIMB 13405 / ORS 571)).